Consider the following 85-residue polypeptide: U4-theraphotoxin-Hhn1c (85 aa).

Residues 1–22 (MKVTLIAIVTCAAVLVLHTTAA) form the signal peptide. The propeptide occupies 23 to 48 (EELEAESQLMEVGMPDTELAAVDEER). Intrachain disulfides connect Cys-52–Cys-66, Cys-56–Cys-77, and Cys-71–Cys-82.

It belongs to the neurotoxin 12 (Hwtx-2) family. 02 (Hwtx-2) subfamily. In terms of tissue distribution, expressed by the venom gland.

Its subcellular location is the secreted. In terms of biological role, postsynaptic neurotoxin. This Cyriopagopus hainanus (Chinese bird spider) protein is U4-theraphotoxin-Hhn1c.